Consider the following 285-residue polypeptide: Polyamine aminopropyltransferase (285 aa).

A PABS domain is found at 5-241 (DTWFTEHFQT…GWWSVTLSSK (237 aa)). Position 35 (glutamine 35) interacts with S-methyl-5'-thioadenosine. Residues histidine 66 and aspartate 90 each coordinate spermidine. S-methyl-5'-thioadenosine-binding positions include aspartate 110 and 141–142 (DG). Aspartate 160 acts as the Proton acceptor in catalysis. Spermidine is bound at residue 160-163 (DSTD). Proline 167 serves as a coordination point for S-methyl-5'-thioadenosine.

It belongs to the spermidine/spermine synthase family. As to quaternary structure, homodimer or homotetramer.

The protein localises to the cytoplasm. It carries out the reaction S-adenosyl 3-(methylsulfanyl)propylamine + putrescine = S-methyl-5'-thioadenosine + spermidine + H(+). The protein operates within amine and polyamine biosynthesis; spermidine biosynthesis; spermidine from putrescine: step 1/1. Catalyzes the irreversible transfer of a propylamine group from the amino donor S-adenosylmethioninamine (decarboxy-AdoMet) to putrescine (1,4-diaminobutane) to yield spermidine. This chain is Polyamine aminopropyltransferase, found in Xylella fastidiosa (strain Temecula1 / ATCC 700964).